A 433-amino-acid chain; its full sequence is Enolase (433 aa).

Glutamine 167 is a binding site for (2R)-2-phosphoglycerate. The active-site Proton donor is glutamate 209. Residues aspartate 246, glutamate 291, and aspartate 318 each contribute to the Mg(2+) site. (2R)-2-phosphoglycerate contacts are provided by lysine 343, arginine 372, serine 373, and lysine 394. Catalysis depends on lysine 343, which acts as the Proton acceptor.

This sequence belongs to the enolase family. In terms of assembly, component of the RNA degradosome, a multiprotein complex involved in RNA processing and mRNA degradation. Mg(2+) serves as cofactor.

The protein resides in the cytoplasm. It localises to the secreted. It is found in the cell surface. The enzyme catalyses (2R)-2-phosphoglycerate = phosphoenolpyruvate + H2O. The protein operates within carbohydrate degradation; glycolysis; pyruvate from D-glyceraldehyde 3-phosphate: step 4/5. Functionally, catalyzes the reversible conversion of 2-phosphoglycerate (2-PG) into phosphoenolpyruvate (PEP). It is essential for the degradation of carbohydrates via glycolysis. The polypeptide is Enolase (Shewanella frigidimarina (strain NCIMB 400)).